The primary structure comprises 2351 residues: Protein FAM186A (2351 aa).

Residues 296–340 (EAEKELSLKIIRDLSNENEMLQQKLQDAEEKCEQLIRSKIVIEQL) adopt a coiled-coil conformation. Disordered regions lie at residues 412–460 (ERTP…SWKR), 470–489 (ETSG…SEAK), 505–538 (EMKS…GKSG), 593–667 (QFDD…SEQS), 809–838 (STVQ…SGMS), 868–976 (LQMK…RGLE), 1805–1837 (GGQS…PGQP), and 1888–1907 (FQPP…STPG). Over residues 433–446 (DSTKDNVSLKKGDF) the composition is skewed to basic and acidic residues. Polar residues predominate over residues 472–484 (SGPNLSDNKSGQK). The segment covering 506 to 520 (MKSFSEDKSKSPTEA) has biased composition (basic and acidic residues). A compositionally biased stretch (polar residues) spans 527–538 (LTETKSQGGKSG). Residues 603–612 (GKIKGKKHHI) show a composition bias toward basic residues. Composition is skewed to basic and acidic residues over residues 619–632 (SKEE…ELTK) and 812–823 (QKDHKEKEKQRQ). Positions 812–860 (QKDHKEKEKQRQEQYLQEGQEQMSGMSLKQQLLGERNLLKEHYEKISEN) form a coiled coil. Residues 824–838 (EQYLQEGQEQMSGMS) are compositionally biased toward polar residues. Basic and acidic residues-rich tracts occupy residues 901-912 (AEQEEKQKQRGQ), 939-955 (LEKE…EAKH), and 964-976 (KGKE…RGLE). The segment covering 1816–1835 (PQAPPSPGQLPISRAPPTPG) has biased composition (pro residues). Residues 1894–1907 (AEQSPYLQAPSTPG) show a composition bias toward polar residues.

Belongs to the FAM186 family.

The polypeptide is Protein FAM186A (FAM186A) (Homo sapiens (Human)).